Here is a 484-residue protein sequence, read N- to C-terminus: UDP-N-acetylmuramoyl-L-alanyl-D-glutamate--2,6-diaminopimelate ligase (484 aa).

UDP-N-acetyl-alpha-D-muramoyl-L-alanyl-D-glutamate is bound at residue Ser29. 108–114 is a binding site for ATP; sequence GTSGKTS. UDP-N-acetyl-alpha-D-muramoyl-L-alanyl-D-glutamate contacts are provided by residues 150–151, Ser177, Gln183, and Arg185; that span reads TT. N6-carboxylysine is present on Lys217. Residues Arg381, 405-408, Gly453, and Glu457 each bind meso-2,6-diaminopimelate; that span reads DNPR. A Meso-diaminopimelate recognition motif motif is present at residues 405–408; it reads DNPR.

It belongs to the MurCDEF family. MurE subfamily. It depends on Mg(2+) as a cofactor. Post-translationally, carboxylation is probably crucial for Mg(2+) binding and, consequently, for the gamma-phosphate positioning of ATP.

It localises to the cytoplasm. The catalysed reaction is UDP-N-acetyl-alpha-D-muramoyl-L-alanyl-D-glutamate + meso-2,6-diaminopimelate + ATP = UDP-N-acetyl-alpha-D-muramoyl-L-alanyl-gamma-D-glutamyl-meso-2,6-diaminopimelate + ADP + phosphate + H(+). Its pathway is cell wall biogenesis; peptidoglycan biosynthesis. Its function is as follows. Catalyzes the addition of meso-diaminopimelic acid to the nucleotide precursor UDP-N-acetylmuramoyl-L-alanyl-D-glutamate (UMAG) in the biosynthesis of bacterial cell-wall peptidoglycan. The polypeptide is UDP-N-acetylmuramoyl-L-alanyl-D-glutamate--2,6-diaminopimelate ligase (Mesorhizobium japonicum (strain LMG 29417 / CECT 9101 / MAFF 303099) (Mesorhizobium loti (strain MAFF 303099))).